Here is a 1167-residue protein sequence, read N- to C-terminus: PH and Rap-GAP domain-containing protein DDB_G0271806 (1167 aa).

2 PH domains span residues 35–140 and 165–257; these read NCVK…SSSL and HVYL…SRIP. A disordered region spans residues 95–160; the sequence is GIDNNNCTNS…TNANTNNGLS (66 aa). Positions 98–155 are enriched in low complexity; sequence NNNCTNSNSNNNNNNSDLIHLSAPSLSSSTSSTISPISSSSSLTTTTTTTTTTTNANT. Disordered stretches follow at residues 335–361, 376–400, and 645–734; these read SGGGSNNSSPSSLQSQQAKESGNGGSL, WRFSSSPSQGRVSIGGGGDRSSTQV, and YSRS…LEPE. Positions 340 to 351 are enriched in low complexity; sequence NNSSPSSLQSQQ. Over residues 648-676 the composition is skewed to polar residues; the sequence is SEPNLQSCLSSSPSTRETMVPSSPSSHQL. Low complexity predominate over residues 687-732; sequence EQQLSSSSSSSSQQLQLQLQQQEQEQLLQEQPEAEQSQPEPQPQLE. One can recognise a Rap-GAP domain in the interval 950–1162; it reads LLSFEERQTT…RTRESLLNYY (213 aa).

The polypeptide is PH and Rap-GAP domain-containing protein DDB_G0271806 (Dictyostelium discoideum (Social amoeba)).